A 409-amino-acid polypeptide reads, in one-letter code: Pectin acetylesterase 4 (409 aa).

The signal sequence occupies residues 1–32 (MVIRSLLQCRTWSKSDWLLASIGIVLIVYSFS). N-linked (GlcNAc...) asparagine glycans are attached at residues Asn36 and Asn163. Active-site charge relay system residues include Ser199, Asp295, and His362. Residues Asn379 and Asn406 are each glycosylated (N-linked (GlcNAc...) asparagine).

Belongs to the pectinacetylesterase family.

It localises to the secreted. It is found in the cell wall. In terms of biological role, hydrolyzes acetyl esters in homogalacturonan regions of pectin. In type I primary cell wall, galacturonic acid residues of pectin can be acetylated at the O-2 and O-3 positions. Decreasing the degree of acetylation of pectin gels in vitro alters their physical properties. This chain is Pectin acetylesterase 4, found in Arabidopsis thaliana (Mouse-ear cress).